The sequence spans 213 residues: Large ribosomal subunit protein uL3 (213 aa).

The disordered stretch occupies residues 122 to 147; it reads AIKRHGQSRGPMAHGSRYHRRPGSMG.

It belongs to the universal ribosomal protein uL3 family. Part of the 50S ribosomal subunit. Forms a cluster with proteins L14 and L19.

Functionally, one of the primary rRNA binding proteins, it binds directly near the 3'-end of the 23S rRNA, where it nucleates assembly of the 50S subunit. The sequence is that of Large ribosomal subunit protein uL3 from Geobacillus stearothermophilus (Bacillus stearothermophilus).